The sequence spans 129 residues: Small ribosomal subunit protein uS11 (129 aa).

The protein belongs to the universal ribosomal protein uS11 family. Part of the 30S ribosomal subunit. Interacts with proteins S7 and S18. Binds to IF-3.

In terms of biological role, located on the platform of the 30S subunit, it bridges several disparate RNA helices of the 16S rRNA. Forms part of the Shine-Dalgarno cleft in the 70S ribosome. The sequence is that of Small ribosomal subunit protein uS11 from Phenylobacterium zucineum (strain HLK1).